The sequence spans 598 residues: N-acetylmuramoyl-L-alanine amidase (598 aa).

The signal sequence occupies residues 1–31; the sequence is MSPGNWKTTMVVRGILLILYGLLLQPEPGTA. 2 disordered regions span residues 172 to 194 and 212 to 233; these read SSAH…SPNV and STGV…KAKS. Phosphoserine is present on Ser-261. An N-linked (GlcNAc...) asparagine glycan is attached at Asn-353. Residues 428–554 enclose the N-acetylmuramoyl-L-alanine amidase domain; the sequence is FLYIHHTYVP…RQLVRTDCPG (127 aa). His-432 is a Zn(2+) binding site. Cys-441 and Cys-447 are disulfide-bonded. N-linked (GlcNAc...) asparagine glycosylation is present at Asn-507. The Zn(2+) site is built by His-544 and Cys-552.

It belongs to the N-acetylmuramoyl-L-alanine amidase 2 family. Zn(2+) serves as cofactor.

Its subcellular location is the secreted. The protein resides in the membrane. The enzyme catalyses Hydrolyzes the link between N-acetylmuramoyl residues and L-amino acid residues in certain cell-wall glycopeptides.. In terms of biological role, may play a scavenger role by digesting biologically active peptidoglycan (PGN) into biologically inactive fragments. Has no direct bacteriolytic activity. The polypeptide is N-acetylmuramoyl-L-alanine amidase (PGLYRP2) (Sus scrofa (Pig)).